A 111-amino-acid polypeptide reads, in one-letter code: Universal stress protein B (111 aa).

The next 2 helical transmembrane spans lie at 1–21 (MIST…NMAR) and 90–110 (FILT…LILW).

It belongs to the universal stress protein B family.

The protein resides in the cell inner membrane. This chain is Universal stress protein B, found in Yersinia enterocolitica serotype O:8 / biotype 1B (strain NCTC 13174 / 8081).